A 1398-amino-acid chain; its full sequence is MAP-homologous protein 1 (1398 aa).

Methionine 1 carries the N-acetylmethionine modification. Residues 21–77 (GWLVRPSASTSKSSRPGKSESKANSVAPDIQMDTARPPVFETSVDSSSSILSSNDKG) form a disordered region. Residues 27 to 36 (SASTSKSSRP) show a composition bias toward polar residues. Low complexity predominate over residues 63-73 (SVDSSSSILSS). Position 81 is a phosphoserine (serine 81). 3 disordered regions span residues 90-144 (NQRA…APAP), 156-186 (HRKK…GAAI), and 191-210 (TATI…PPSY). Polar residues-rich tracts occupy residues 91 to 102 (QRANAGSTSVPT) and 114 to 123 (VVETNLSNVE). A compositionally biased stretch (basic and acidic residues) spans 159 to 186 (KDQEQQEKERERKERSPSPTHVDRGAAI). Residue lysine 221 forms a Glycyl lysine isopeptide (Lys-Gly) (interchain with G-Cter in ubiquitin) linkage. Threonine 222 bears the Phosphothreonine mark. 4 disordered regions span residues 244-270 (HSPE…PDPR), 296-382 (SSAS…PSSH), 395-428 (GNNN…SSME), and 515-548 (NPEE…NNSQ). Serine 309, serine 311, serine 354, and serine 357 each carry phosphoserine. Low complexity predominate over residues 357–371 (SIVDTVDSNSDVSSS). Residues 372-381 (AQNNNQTPSS) are compositionally biased toward polar residues. The segment covering 396–426 (NNNNNSTNASSLSANVNNPDTSSTSLWSSSS) has biased composition (low complexity). Basic and acidic residues predominate over residues 521-538 (ANAKSKEEMAPQKQNEVE). Threonine 577 carries the post-translational modification Phosphothreonine. Low complexity predominate over residues 605 to 615 (STSSLASMVSS). Disordered regions lie at residues 605–630 (STSS…EILP), 1148–1169 (LKSP…PNSE), and 1203–1223 (DAED…HEDV). Residues 1160–1169 (GGNQAQPNSE) are compositionally biased toward polar residues. Residues 1208 to 1223 (VEFREGDDSNVNHEDV) show a composition bias toward basic and acidic residues. A tau/MAP repeat-like region spans residues 1227–1258 (DQQFRDEVDIKNKYSIIKRELEHEKLVGGGDL). The segment at 1313–1372 (QEETAFRTKDEQQSSQSNDSSANASPTTDPISTGSNTSRTNDNAHIPPTDAPGFDKFMNN) is disordered. The span at 1325–1337 (QSSQSNDSSANAS) shows a compositional bias: low complexity. Residues 1338–1355 (PTTDPISTGSNTSRTNDN) show a composition bias toward polar residues.

The protein localises to the cytoplasm. The protein resides in the cytoskeleton. Its subcellular location is the spindle. Its function is as follows. Essential for the formation and/or stabilization of microtubules. Binds to microtubules in vitro. In Saccharomyces cerevisiae (strain ATCC 204508 / S288c) (Baker's yeast), this protein is MAP-homologous protein 1 (MHP1).